The following is a 455-amino-acid chain: Gamma-aminobutyric acid receptor subunit alpha-1 (455 aa).

The signal sequence occupies residues 1–27; the sequence is MKRLLVLCDCLWAWSLLLNALTERSYG. At 28–253 the chain is on the extracellular side; the sequence is QTSSQDELKD…FHLKRKIGYF (226 aa). N-linked (GlcNAc...) asparagine glycosylation is present at N38. Residue R94 coordinates 4-aminobutanoate. N-linked (GlcNAc...) asparagine glycosylation occurs at N138. T157 lines the 4-aminobutanoate pocket. C166 and C180 are oxidised to a cystine. A helical transmembrane segment spans residues 254–274; it reads VIQTYLPCIMTVILSQVSFWL. Residues 275-279 lie on the Cytoplasmic side of the membrane; sequence NRESV. The chain crosses the membrane as a helical span at residues 280-301; that stretch reads PARTVFGVTTVLTMTTLSISAR. Over 302–311 the chain is Extracellular; the sequence is NSLPKVAYAT. The helical transmembrane segment at 312-333 threads the bilayer; sequence AMDWFIAVCYAFVFSALIEFAT. Topologically, residues 334 to 420 are cytoplasmic; that stretch reads VNYFTKRGYA…TFNSVSKIDR (87 aa). A helical membrane pass occupies residues 421–440; that stretch reads LSRIAFPLLFGIFNLVYWAT. Residues 441–455 lie on the Extracellular side of the membrane; sequence YLNREPQLKAPTPHQ.

It belongs to the ligand-gated ion channel (TC 1.A.9) family. Gamma-aminobutyric acid receptor (TC 1.A.9.5) subfamily. GABRA1 sub-subfamily. In terms of assembly, heteropentamer, formed by a combination of alpha (GABRA1-6), beta (GABRB1-3), gamma (GABRG1-3), delta (GABRD), epsilon (GABRE), rho (GABRR1-3), pi (GABRP) and theta (GABRQ) subunits, each subunit exhibiting distinct physiological and pharmacological properties. Brain.

The protein resides in the postsynaptic cell membrane. It localises to the cell membrane. It catalyses the reaction chloride(in) = chloride(out). With respect to regulation, allosterically activated by benzodiazepines, the neuroanesthetic alphaxalone and pentobarbital. Inhibited by the antagonist bicuculline. Potentiated by histamine. In terms of biological role, alpha subunit of the heteropentameric ligand-gated chloride channel gated by gamma-aminobutyric acid (GABA), a major inhibitory neurotransmitter in the brain. GABA-gated chloride channels, also named GABA(A) receptors (GABAAR), consist of five subunits arranged around a central pore and contain GABA active binding site(s) located at the alpha and beta subunit interface(s). When activated by GABA, GABAARs selectively allow the flow of chloride anions across the cell membrane down their electrochemical gradient. Chloride influx into the postsynaptic neuron following GABAAR opening decreases the neuron ability to generate a new action potential, thereby reducing nerve transmission. The GABAARs can also initiate the formation of functional inhibitory GABAergic synapses. GABAARs function also as histamine receptor where histamine binds at the interface of two neighboring beta subunits and potentiates GABA response. This is Gamma-aminobutyric acid receptor subunit alpha-1 (GABRA1) from Gallus gallus (Chicken).